The primary structure comprises 514 residues: Cytochrome P450 94A1 (514 aa).

Residues 7–29 (EVLLPYLLPLLLLILPTTIFFLT) form a helical membrane-spanning segment. Cysteine 458 contacts heme.

It belongs to the cytochrome P450 family. The cofactor is heme.

Its subcellular location is the endoplasmic reticulum membrane. Its function is as follows. Catalyzes the omega-hydroxylation of various fatty acids (FA) from 10 to 18 carbon atoms. The substrate specificity is higher for laurate &gt; palmitate &gt; myristate &gt; linolenate &gt; linoleate &gt; oleate &gt; caprate. May play a minor role in cutin synthesis and could be involved in plant defense. The chain is Cytochrome P450 94A1 (CYP94A1) from Vicia sativa (Spring vetch).